The following is a 208-amino-acid chain: MTGKKRSASSSRWLQEHFSDKYVQQAQKKGLRSRAWFKLDEIQQSDKLFKPGMTVVDLGAAPGGWSQYVVTQIGGKGRIIACDLLPMDPIVGVDFLQGDFRDELVMKALLERVGDSKVQVVMSDMAPNMSGTPAVDIPRAMYLVELALEMCRDVLAPGGSFVVKVFQGEGFDEYLREIRSLFTKVKVRKPDSSRARSREVYIVATGRK.

Gly63, Trp65, Asp83, Asp99, and Asp124 together coordinate S-adenosyl-L-methionine. Lys164 (proton acceptor) is an active-site residue.

This sequence belongs to the class I-like SAM-binding methyltransferase superfamily. RNA methyltransferase RlmE family.

Its subcellular location is the cytoplasm. It catalyses the reaction uridine(2552) in 23S rRNA + S-adenosyl-L-methionine = 2'-O-methyluridine(2552) in 23S rRNA + S-adenosyl-L-homocysteine + H(+). Functionally, specifically methylates the uridine in position 2552 of 23S rRNA at the 2'-O position of the ribose in the fully assembled 50S ribosomal subunit. This chain is Ribosomal RNA large subunit methyltransferase E, found in Salmonella agona (strain SL483).